Consider the following 2186-residue polypeptide: Non-reducing polyketide synthase men2 (2186 aa).

The Starter acyltransferase (SAT) domain maps to 16 to 255; sequence FFGDQTVDAL…MQLPLGTPAH (240 aa). Positions 382–815 constitute a Ketosynthase family 3 (KS3) domain; it reads SNLIAVVGQS…GGNNCVLLEE (434 aa). Residues Cys-554, His-690, and His-729 each act as for beta-ketoacyl synthase activity in the active site. Residues 914–1204 enclose the Malonyl-CoA:ACP transacylase (MAT) domain; that stretch reads VFAFTGQGAQ…SSLVKSTLSA (291 aa). A product template (PT) domain region spans residues 1299–1623; the sequence is TASLQQVRSE…TRRVLATVLG (325 aa). The segment at 1303-1434 is N-terminal hotdog fold; it reads QQVRSEQING…CKLHFDKRGS (132 aa). The region spanning 1303–1619 is the PKS/mFAS DH domain; sequence QQVRSEQING…FQRLTRRVLA (317 aa). The active-site Proton acceptor; for dehydratase activity is His-1335. Residues 1463-1619 are C-terminal hotdog fold; the sequence is TGHRLPKSVV…FQRLTRRVLA (157 aa). Asp-1523 serves as the catalytic Proton donor; for dehydratase activity. Residues 1666–1742 enclose the Carrier 1 domain; it reads VGDEKADAAI…GLRRAISELS (77 aa). Ser-1702 is subject to O-(pantetheine 4'-phosphoryl)serine. The disordered stretch occupies residues 1747-1785; it reads GPASGSVSVSSSATTTHGMTTPSSTSSAQSSQSSQTPDG. A compositionally biased stretch (low complexity) spans 1749-1783; the sequence is ASGSVSVSSSATTTHGMTTPSSTSSAQSSQSSQTP. The 78-residue stretch at 1784 to 1861 folds into the Carrier 2 domain; that stretch reads DGPGIYANAV…HVRRALGSDS (78 aa). Ser-1821 carries the O-(pantetheine 4'-phosphoryl)serine modification. The interval 1857–1878 is disordered; it reads LGSDSDGDSKPKSAPAPPAPEP. Residues 1921–2163 form a thioesterase (TE) domain region; sequence LFFLPDGTGY…TMPCDHLSLL (243 aa).

The cofactor is pantetheine 4'-phosphate.

Its pathway is secondary metabolite biosynthesis. Its function is as follows. Non-reducing polyketide synthase; part of the gene cluster that mediates the biosynthesis of menisporopsin A, a bioactive macrocyclic polylactone. The biosynthesis of menisporopsin A is performed by a reducing (man1) and a non-reducing (men2) polyketide synthase that catalyze the formation of each menisporopsin A subunits, while the esterification and cyclolactonization activities are probably peformed by the unusual thioesterase domain of men2. First, a reduced diketide intermediate, 3-hydroxybutyryl-S-ACP is produced by men1 and transferred to men2; this is followed by a second reduced diketide which is further elongated using 3 units of malonyl-coA to form a reduced pentaketide. The cyclization of this intermediate by the PT domain forms the second subunit, 2,4-dihydroxy-6-(2-hydroxy-n-propyl)benzoyl-S-ACP. The TE domain of men2 then esterifies the secondary hydroxyl group on the side chain of the second subunit with the acyl-TE of the first subunit to form the first ester intermediate. This process occurs iteratively to form a linear tetraester intermediate. The final subunit is formed by a similar process, except that an extra malonyl-CoA is required in an additional elongation step to form a reduced hexaketide intermediate, and the carbonyl group next to the secondary hydroxyl group is reduced by a trans-acting ketoreductase. Again, the PT domain catalyzes cyclization to form the largest subunit, 2,4-dihydroxy-6-(2,4-dihydroxy-n-pentyl) benzoyl-S-ACP. Then the linear pentaester intermediate is formed. In this step, if the intermediate transfer rate is slow, intra- molecular cyclization involving the secondary hydroxyl group of the pentaester intermediate may occur to form menisporopsin B. Alternatively, transfer of the pentaester intermediate to the TE domain would allow cyclolactonization to be catalyzed by the TE to form menisporopsin A. This Menisporopsis theobromae protein is Non-reducing polyketide synthase men2.